Reading from the N-terminus, the 351-residue chain is Methylthioribose-1-phosphate isomerase (351 aa).

Residues 53 to 55 (RGA), Arg-96, and Gln-205 each bind substrate. The active-site Proton donor is the Asp-246. 256-257 (NK) lines the substrate pocket.

The protein belongs to the eIF-2B alpha/beta/delta subunits family. MtnA subfamily.

The catalysed reaction is 5-(methylsulfanyl)-alpha-D-ribose 1-phosphate = 5-(methylsulfanyl)-D-ribulose 1-phosphate. It functions in the pathway amino-acid biosynthesis; L-methionine biosynthesis via salvage pathway; L-methionine from S-methyl-5-thio-alpha-D-ribose 1-phosphate: step 1/6. In terms of biological role, catalyzes the interconversion of methylthioribose-1-phosphate (MTR-1-P) into methylthioribulose-1-phosphate (MTRu-1-P). The protein is Methylthioribose-1-phosphate isomerase of Synechocystis sp. (strain ATCC 27184 / PCC 6803 / Kazusa).